Consider the following 389-residue polypeptide: Succinate--CoA ligase [ADP-forming] subunit beta (389 aa).

ATP contacts are provided by residues K46, 53 to 55, E99, C102, and E107; that span reads GRG. Mg(2+) is bound by residues N199 and D213. Substrate is bound by residues N264 and 321–323; that span reads GIV.

It belongs to the succinate/malate CoA ligase beta subunit family. In terms of assembly, heterotetramer of two alpha and two beta subunits. Mg(2+) serves as cofactor.

It carries out the reaction succinate + ATP + CoA = succinyl-CoA + ADP + phosphate. The enzyme catalyses GTP + succinate + CoA = succinyl-CoA + GDP + phosphate. It functions in the pathway carbohydrate metabolism; tricarboxylic acid cycle; succinate from succinyl-CoA (ligase route): step 1/1. Succinyl-CoA synthetase functions in the citric acid cycle (TCA), coupling the hydrolysis of succinyl-CoA to the synthesis of either ATP or GTP and thus represents the only step of substrate-level phosphorylation in the TCA. The beta subunit provides nucleotide specificity of the enzyme and binds the substrate succinate, while the binding sites for coenzyme A and phosphate are found in the alpha subunit. The protein is Succinate--CoA ligase [ADP-forming] subunit beta of Haemophilus influenzae (strain PittEE).